Here is a 136-residue protein sequence, read N- to C-terminus: Mediator of RNA polymerase II transcription subunit 31 (136 aa).

The segment covering 117–128 (AEQQQQQQPQAP) has biased composition (low complexity). A disordered region spans residues 117–136 (AEQQQQQQPQAPSHANTTSK).

It belongs to the Mediator complex subunit 31 family. As to quaternary structure, component of the Mediator complex.

It is found in the nucleus. Functionally, component of the Mediator complex, a coactivator involved in the regulated transcription of nearly all RNA polymerase II-dependent genes. Mediator functions as a bridge to convey information from gene-specific regulatory proteins to the basal RNA polymerase II transcription machinery. Mediator is recruited to promoters by direct interactions with regulatory proteins and serves as a scaffold for the assembly of a functional preinitiation complex with RNA polymerase II and the general transcription factors. The chain is Mediator of RNA polymerase II transcription subunit 31 (med31) from Danio rerio (Zebrafish).